The sequence spans 466 residues: Ribulose bisphosphate carboxylase large chain (466 aa).

N6,N6,N6-trimethyllysine is present on Lys4. Residues Asn113 and Thr163 each coordinate substrate. Lys165 acts as the Proton acceptor in catalysis. Lys167 contributes to the substrate binding site. Mg(2+) is bound by residues Lys191, Asp193, and Glu194. N6-carboxylysine is present on Lys191. His284 (proton acceptor) is an active-site residue. Arg285, His317, and Ser369 together coordinate substrate.

The protein belongs to the RuBisCO large chain family. Type I subfamily. Heterohexadecamer of 8 large chains and 8 small chains; disulfide-linked. The disulfide link is formed within the large subunit homodimers. The cofactor is Mg(2+). In terms of processing, the disulfide bond which can form in the large chain dimeric partners within the hexadecamer appears to be associated with oxidative stress and protein turnover.

The protein resides in the plastid. Its subcellular location is the chloroplast. It catalyses the reaction 2 (2R)-3-phosphoglycerate + 2 H(+) = D-ribulose 1,5-bisphosphate + CO2 + H2O. The enzyme catalyses D-ribulose 1,5-bisphosphate + O2 = 2-phosphoglycolate + (2R)-3-phosphoglycerate + 2 H(+). Functionally, ruBisCO catalyzes two reactions: the carboxylation of D-ribulose 1,5-bisphosphate, the primary event in carbon dioxide fixation, as well as the oxidative fragmentation of the pentose substrate in the photorespiration process. Both reactions occur simultaneously and in competition at the same active site. The protein is Ribulose bisphosphate carboxylase large chain of Justicia odora (Water willow).